The following is a 231-amino-acid chain: 7-cyano-7-deazaguanine synthase (231 aa).

8–18 (FSGGQDSTTCL) contributes to the ATP binding site. Residues cysteine 188, cysteine 197, cysteine 200, and cysteine 203 each contribute to the Zn(2+) site.

This sequence belongs to the QueC family. Requires Zn(2+) as cofactor.

The catalysed reaction is 7-carboxy-7-deazaguanine + NH4(+) + ATP = 7-cyano-7-deazaguanine + ADP + phosphate + H2O + H(+). It participates in purine metabolism; 7-cyano-7-deazaguanine biosynthesis. Catalyzes the ATP-dependent conversion of 7-carboxy-7-deazaguanine (CDG) to 7-cyano-7-deazaguanine (preQ(0)). This chain is 7-cyano-7-deazaguanine synthase, found in Cronobacter sakazakii (strain ATCC BAA-894) (Enterobacter sakazakii).